The primary structure comprises 395 residues: Xylose isomerase (395 aa).

Active-site residues include His54 and Asp57. Residues Glu181, Glu217, His220, Asp245, Asp255, Asp257, and Asp293 each coordinate Mg(2+).

It belongs to the xylose isomerase family. In terms of assembly, homotetramer. Mg(2+) serves as cofactor.

Its subcellular location is the cytoplasm. It catalyses the reaction alpha-D-xylose = alpha-D-xylulofuranose. The sequence is that of Xylose isomerase from Arthrobacter sp. (strain FB24).